The chain runs to 143 residues: Snake venom vascular endothelial growth factor toxin (143 aa).

An N-terminal signal peptide occupies residues 1-24 (MAVYLLAVAILFCIQGWPSGTVQG). A Pyrrolidone carboxylic acid (Glu) modification is found at glutamate 25. 3 disulfide bridges follow: cysteine 38/cysteine 80, cysteine 69/cysteine 115, and cysteine 73/cysteine 117. Residues 117-143 (CRPRSPGDVNDGRNPKEGEPRARFPFV) form a disordered region.

It belongs to the PDGF/VEGF growth factor family. Snake venom VEGF subfamily. As to quaternary structure, homodimer; disulfide-linked. Interacts with VEGF receptor-1 (FLT1) with a high affinity, whereas it binds to VEGF receptor-2 (KDR) with a low affinity. Does not bind to VEGFR-3/FLT4 and neuropilin-1 (NRP1). In terms of tissue distribution, expressed by the venom gland.

The protein localises to the secreted. In terms of biological role, snake venom VEGFs may contribute to venom dispersion and prey subjugation by inducing vascular permeability and hypotension. This protein activates the vascular endothelial growth factor receptor-1 (VEGFR-1/FLT1), and consequently promotes the proliferation and tissue factor production of endothelial cells, the neovascularization in the chicken chorioallantoic membrane, and increases vascular permeability. Also stimulates tissue-factor production and human monocyte chemotaxis. This chain is Snake venom vascular endothelial growth factor toxin, found in Protobothrops mucrosquamatus (Taiwan habu).